A 228-amino-acid chain; its full sequence is Ephrin-A5 (228 aa).

An N-terminal signal peptide occupies residues 1–20 (MLHVEMLTLLFLVLWMCVFS). One can recognise an Ephrin RBD domain in the interval 29-162 (ADRYAVYWNS…KLKVFVRPTN (134 aa)). The N-linked (GlcNAc...) asparagine glycan is linked to Asn-37. Cystine bridges form between Cys-62/Cys-102 and Cys-90/Cys-151. Residue Asn-162 is glycosylated (N-linked (GlcNAc...) asparagine; atypical). The interval 186–205 (EPADDTVHESAEPSRGENAA) is disordered. The segment covering 190–200 (DTVHESAEPSR) has biased composition (basic and acidic residues). The GPI-anchor amidated asparagine moiety is linked to residue Asn-203. Positions 204–228 (AAQTPRIPSRLLAILLFLLAMLLTL) are cleaved as a propeptide — removed in mature form.

It belongs to the ephrin family. Binds to the receptor tyrosine kinases EPHA2, EPHA3 and EPHB1. Forms a ternary EFNA5-EPHA3-ADAM10 complex mediating EFNA5 extracellular domain shedding by ADAM10 which regulates the EFNA5-EPHA3 complex internalization and function. Binds to EPHB2. Interacts with EPHA8; activates EPHA8. In terms of tissue distribution, expressed in myogenic progenitor cells.

The protein resides in the cell membrane. It localises to the membrane. Its subcellular location is the caveola. In terms of biological role, cell surface GPI-bound ligand for Eph receptors, a family of receptor tyrosine kinases which are crucial for migration, repulsion and adhesion during neuronal, vascular and epithelial development. Binds promiscuously Eph receptors residing on adjacent cells, leading to contact-dependent bidirectional signaling into neighboring cells. The signaling pathway downstream of the receptor is referred to as forward signaling while the signaling pathway downstream of the ephrin ligand is referred to as reverse signaling. Induces compartmentalized signaling within a caveolae-like membrane microdomain when bound to the extracellular domain of its cognate receptor. This signaling event requires the activity of the Fyn tyrosine kinase. Activates the EPHA3 receptor to regulate cell-cell adhesion and cytoskeletal organization. With the receptor EPHA2 may regulate lens fiber cells shape and interactions and be important for lens transparency maintenance. May function actively to stimulate axon fasciculation. The interaction of EFNA5 with EPHA5 also mediates communication between pancreatic islet cells to regulate glucose-stimulated insulin secretion. Cognate/functional ligand for EPHA7, their interaction regulates brain development modulating cell-cell adhesion and repulsion. The sequence is that of Ephrin-A5 (Efna5) from Mus musculus (Mouse).